The sequence spans 72 residues: MAREDLIEVEAKVKEILPNTKFIVELDNGHTVVAHVSGKIRIHNIRILPGDKVTVELSPYDLSRGRITYRKK.

The 72-residue stretch at Met-1–Lys-72 folds into the S1-like domain.

The protein belongs to the IF-1 family. Component of the 30S ribosomal translation pre-initiation complex which assembles on the 30S ribosome in the order IF-2 and IF-3, IF-1 and N-formylmethionyl-tRNA(fMet); mRNA recruitment can occur at any time during PIC assembly.

The protein localises to the cytoplasm. One of the essential components for the initiation of protein synthesis. Stabilizes the binding of IF-2 and IF-3 on the 30S subunit to which N-formylmethionyl-tRNA(fMet) subsequently binds. Helps modulate mRNA selection, yielding the 30S pre-initiation complex (PIC). Upon addition of the 50S ribosomal subunit IF-1, IF-2 and IF-3 are released leaving the mature 70S translation initiation complex. The chain is Translation initiation factor IF-1 from Acholeplasma laidlawii (strain PG-8A).